The primary structure comprises 752 residues: THO complex subunit HPR1 (752 aa).

Serine 234 is modified (phosphoserine). Residues arginine 648–lysine 752 are disordered. A compositionally biased stretch (basic and acidic residues) spans glutamate 692–serine 702. Over residues proline 720–lysine 752 the composition is skewed to polar residues.

Component of the THO complex, which is composed of HPR1, MFT1, THO2 and THP2. Together with SUB2, TEX1 and YRA1, THO forms the transcription/export (TREX) complex. THO associates with DNA and RNA in vitro.

It is found in the nucleus. Its function is as follows. Component the THO subcomplex of the TREX complex, which operates in coupling transcription elongation to mRNA export. The THO complex is recruited to transcribed genes and moves along the gene with the elongating polymerase during transcription. THO is important for stabilizing nascent RNA in the RNA polymerase II elongation complex by preventing formation of DNA:RNA hybrids behind the elongating polymerase. It functions in cotranscriptional formation of an export-competent messenger ribonucleoprotein particle (mRNP) by facilitating the loading of ATP-dependent RNA helicase SUB2 and the mRNA export factor YRA1 along the nascent mRNA. In Saccharomyces cerevisiae (strain ATCC 204508 / S288c) (Baker's yeast), this protein is THO complex subunit HPR1 (HPR1).